The sequence spans 2026 residues: E3 ubiquitin-protein ligase TRIP12 (2026 aa).

Polar residues-rich tracts occupy residues 1–10, 32–42, and 73–84; these read MSNRPNSNPG, GRNSLSLSVGS, and SSVSEPNITFSP. Positions 1–437 are disordered; it reads MSNRPNSNPG…SGESESDDSE (437 aa). Low complexity-rich tracts occupy residues 94–112, 135–161, 171–188, and 199–241; these read SSHF…AISP, AEPA…STPS, LLSS…SAAG, and AAKP…SSAA. The span at 359–371 shows a compositional bias: polar residues; sequence QKTTGSCASTSRR. The span at 379–391 shows a compositional bias: basic and acidic residues; it reads GAAEARRQEKMAD. Residues 392 to 404 show a composition bias toward polar residues; sequence SDNNQDGANSSAA. Positions 412 to 430 are enriched in low complexity; that stretch reads GASASSSVAGAVGMTTSGE. The 88-residue stretch at 789 to 876 folds into the WWE domain; the sequence is MLKKGSAQTT…DPELAKCFIK (88 aa). Disordered regions lie at residues 1008-1123 and 1441-1470; these read SNVT…SVSN and GCKD…KQDE. The span at 1040–1053 shows a compositional bias: basic residues; that stretch reads KRKRLPKRGPRRPK. A compositionally biased stretch (basic and acidic residues) spans 1056–1065; that stretch reads PPRDDDKVDN. The segment covering 1068–1079 has biased composition (low complexity); it reads KSPTTTQSPKSS. The span at 1094–1104 shows a compositional bias: polar residues; that stretch reads TQANSANSEPS. Residues 1530–1604 form a K-box region; the sequence is EIIPTGEFIN…AMQRLLDTNP (75 aa). Residues 1919 to 2026 form the HECT domain; that stretch reads PDHGYTHDSR…REGQQSFHLS (108 aa). The active-site Glycyl thioester intermediate is Cys1993.

This sequence belongs to the UPL family. K-HECT subfamily.

It localises to the nucleus. The protein resides in the nucleoplasm. It carries out the reaction S-ubiquitinyl-[E2 ubiquitin-conjugating enzyme]-L-cysteine + [acceptor protein]-L-lysine = [E2 ubiquitin-conjugating enzyme]-L-cysteine + N(6)-ubiquitinyl-[acceptor protein]-L-lysine.. Its pathway is protein modification; protein ubiquitination. Functionally, E3 ubiquitin-protein ligase involved in ubiquitin fusion degradation (UFD) pathway and regulation of DNA repair. Part of the ubiquitin fusion degradation (UFD) pathway, a process that mediates ubiquitination of protein at their N-terminus, regardless of the presence of lysine residues in target proteins. Acts as a key regulator of DNA damage response by acting as a suppressor of RNF168, an E3 ubiquitin-protein ligase that promotes accumulation of 'Lys-63'-linked histone H2A and H2AX at DNA damage sites, thereby acting as a guard against excessive spreading of ubiquitinated chromatin at damaged chromosomes. This chain is E3 ubiquitin-protein ligase TRIP12 (trip12), found in Danio rerio (Zebrafish).